Consider the following 429-residue polypeptide: Enolase (429 aa).

Glutamine 167 serves as a coordination point for (2R)-2-phosphoglycerate. The active-site Proton donor is the glutamate 209. Aspartate 246, glutamate 289, and aspartate 316 together coordinate Mg(2+). Lysine 341, arginine 370, serine 371, and lysine 392 together coordinate (2R)-2-phosphoglycerate. Catalysis depends on lysine 341, which acts as the Proton acceptor.

It belongs to the enolase family. Component of the RNA degradosome, a multiprotein complex involved in RNA processing and mRNA degradation. Mg(2+) is required as a cofactor.

Its subcellular location is the cytoplasm. It is found in the secreted. It localises to the cell surface. The enzyme catalyses (2R)-2-phosphoglycerate = phosphoenolpyruvate + H2O. It functions in the pathway carbohydrate degradation; glycolysis; pyruvate from D-glyceraldehyde 3-phosphate: step 4/5. Functionally, catalyzes the reversible conversion of 2-phosphoglycerate (2-PG) into phosphoenolpyruvate (PEP). It is essential for the degradation of carbohydrates via glycolysis. This chain is Enolase, found in Cellvibrio japonicus (strain Ueda107) (Pseudomonas fluorescens subsp. cellulosa).